Consider the following 351-residue polypeptide: Polycomb group RING finger protein 6 (351 aa).

Residues 1–114 (MEEAETDATE…FSLRLESGRA (114 aa)) are disordered. Positions 9 to 19 (TENKRASEAKR) are enriched in basic and acidic residues. The span at 24–37 (LPPPPPPISPPALI) shows a compositional bias: pro residues. Ser32 is modified (phosphoserine). A compositionally biased stretch (low complexity) spans 38 to 51 (PAPAAGEEGPASLA). Residues 62 to 80 (RPPELEPERSLGRLRGRFE) are compositionally biased toward basic and acidic residues. The stretch at 69 to 110 (ERSLGRLRGRFEDYDEELEEDEEMEEEEEEEEEMSHFSLRLE) forms a coiled coil. Over residues 81–101 (DYDEELEEDEEMEEEEEEEEE) the composition is skewed to acidic residues. A Phosphoserine modification is found at Ser116. The RING-type zinc finger occupies 135 to 174 (CSICKGYLIDATTITECLHTFCKSCIVRHFYYSNRCPKCN). Residues Lys224 and Lys235 each participate in a glycyl lysine isopeptide (Lys-Gly) (interchain with G-Cter in SUMO2) cross-link.

Component of a PRC1-like complex. Interacts with BMI1/PCGF4, RING1 and RNF2. Interacts with KDM5D. Interacts with CBX4, CBX6, CBX7 and CBX8. Post-translationally, phosphorylated during mitosis.

Its subcellular location is the nucleus. In terms of biological role, transcriptional repressor. May modulate the levels of histone H3K4Me3 by activating KDM5D histone demethylase. Component of a Polycomb group (PcG) multiprotein PRC1-like complex, a complex class required to maintain the transcriptionally repressive state of many genes, including Hox genes, throughout development. PcG PRC1 complex acts via chromatin remodeling and modification of histones; it mediates monoubiquitination of histone H2A 'Lys-119', rendering chromatin heritably changed in its expressibility. Within the PRC1-like complex, regulates RNF2 ubiquitin ligase activity. This chain is Polycomb group RING finger protein 6 (Pcgf6), found in Rattus norvegicus (Rat).